The following is a 213-amino-acid chain: Protein GrpE (213 aa).

Basic and acidic residues predominate over residues 1–23 (MSDEKKPEAETSESLQKREEKLA). A disordered region spans residues 1–43 (MSDEKKPEAETSESLQKREEKLAETLASEPAAQGEAEDAAAAG). Positions 29-43 (EPAAQGEAEDAAAAG) are enriched in low complexity.

This sequence belongs to the GrpE family. Homodimer.

The protein resides in the cytoplasm. Its function is as follows. Participates actively in the response to hyperosmotic and heat shock by preventing the aggregation of stress-denatured proteins, in association with DnaK and GrpE. It is the nucleotide exchange factor for DnaK and may function as a thermosensor. Unfolded proteins bind initially to DnaJ; upon interaction with the DnaJ-bound protein, DnaK hydrolyzes its bound ATP, resulting in the formation of a stable complex. GrpE releases ADP from DnaK; ATP binding to DnaK triggers the release of the substrate protein, thus completing the reaction cycle. Several rounds of ATP-dependent interactions between DnaJ, DnaK and GrpE are required for fully efficient folding. The protein is Protein GrpE of Parvibaculum lavamentivorans (strain DS-1 / DSM 13023 / NCIMB 13966).